Here is a 1067-residue protein sequence, read N- to C-terminus: Glycine--tRNA ligase, chloroplastic/mitochondrial 2 (1067 aa).

Residues 1 to 50 (MAILHFSLPLIVSFLRPHASPRFFLLPRSLSQSPFLSRRRFHRTSAVSSA) constitute a chloroplast and mitochondrion transit peptide. Glutamate 513 contacts substrate. ATP contacts are provided by residues 589–596 (RNSGINIE), 619–624 (LVVPQN), 744–745 (RL), and 859–862 (GLRR). A substrate-binding site is contributed by 624–628 (NLLNE). 855-859 (NDPFG) is a substrate binding site.

This sequence belongs to the class-II aminoacyl-tRNA synthetase family. Homodimer.

It is found in the plastid. Its subcellular location is the chloroplast. The protein localises to the mitochondrion. The catalysed reaction is tRNA(Gly) + glycine + ATP = glycyl-tRNA(Gly) + AMP + diphosphate. In terms of biological role, catalyzes the attachment of glycine to tRNA(Gly). Is also able produce diadenosine tetraphosphate (Ap4A), a universal pleiotropic signaling molecule needed for cell regulation pathways, by direct condensation of 2 ATPs. In Arabidopsis thaliana (Mouse-ear cress), this protein is Glycine--tRNA ligase, chloroplastic/mitochondrial 2.